Reading from the N-terminus, the 44-residue chain is Unknown protein 1 (44 aa).

This is Unknown protein 1 from Lonomia obliqua (Moth).